We begin with the raw amino-acid sequence, 722 residues long: Mesentericin-Y105 transport/processing ATP-binding protein MesD (722 aa).

The region spanning 16 to 143 (QVDERDCGVA…EEWTGVSIFI (128 aa)) is the Peptidase C39 domain. Residue Cys22 is part of the active site. The next 8 helical transmembrane spans lie at 171–191 (LLVINIVIAALLVTLVSILGS), 210–230 (LGIVSLGLIFAYVIQQLLSYA), 242–262 (LSIDIILSYIKHIFELPMSFF), 287–307 (TMLSVFLDLGILVIVGTVLVV), 311–331 (TLFLISLIAIPAYALVVWLFM), 401–421 (SLLQLSLNVVILWVGAQLVMT), 429–449 (LITYNALLGFFTDPLQNIINL), and 518–538 (IALVGISGSGKSTLVKLLVNF). The 283-residue stretch at 173-455 (VINIVIAALL…IINLQTKLQQ (283 aa)) folds into the ABC transmembrane type-1 domain. The region spanning 489-722 (LVADHITYKY…GGFYASLFNH (234 aa)) is the ABC transporter domain. 522–529 (GISGSGKS) lines the ATP pocket.

This sequence belongs to the ABC transporter superfamily.

Its subcellular location is the cell membrane. Involved in the export process of the bacteriocin mesentericin-Y105. The protein is Mesentericin-Y105 transport/processing ATP-binding protein MesD (mesD) of Leuconostoc mesenteroides.